Here is a 1239-residue protein sequence, read N- to C-terminus: Erythroid differentiation-related factor 1 (1239 aa).

4 disordered regions span residues 1 to 39, 219 to 269, 517 to 559, and 620 to 646; these read MGDP…QGSA, AQPV…REPL, PKKE…DPAD, and KKES…TRGG. Composition is skewed to low complexity over residues 9–28 and 253–263; these read AEAS…LSQA and SSVSEDPSASS. Residues 530–547 show a composition bias toward acidic residues; sequence NSDESYSEEEEEMADSDE. TPR repeat units lie at residues 693-726 and 914-953; these read SKAY…HDTY and AQAH…LGTR.

The protein localises to the nucleus. Functionally, transcription factor involved in erythroid differentiation. Involved in transcriptional activation of the globin gene. The sequence is that of Erythroid differentiation-related factor 1 (Edrf1) from Mus musculus (Mouse).